The chain runs to 393 residues: tRNA-specific 2-thiouridylase MnmA (393 aa).

ATP is bound by residues 19 to 26 and leucine 45; that span reads AMSGGVDS. Cysteine 113 (nucleophile) is an active-site residue. Cysteine 113 and cysteine 210 are joined by a disulfide. Glycine 137 lines the ATP pocket. Positions 160 to 162 are interaction with tRNA; sequence RDQ. Cysteine 210 functions as the Cysteine persulfide intermediate in the catalytic mechanism.

This sequence belongs to the MnmA/TRMU family.

It localises to the cytoplasm. It catalyses the reaction S-sulfanyl-L-cysteinyl-[protein] + uridine(34) in tRNA + AH2 + ATP = 2-thiouridine(34) in tRNA + L-cysteinyl-[protein] + A + AMP + diphosphate + H(+). Its function is as follows. Catalyzes the 2-thiolation of uridine at the wobble position (U34) of tRNA, leading to the formation of s(2)U34. This is tRNA-specific 2-thiouridylase MnmA from Bradyrhizobium diazoefficiens (strain JCM 10833 / BCRC 13528 / IAM 13628 / NBRC 14792 / USDA 110).